The sequence spans 286 residues: Bifunctional protein FolD (286 aa).

Residues 164-166 (GTS) and Ile230 contribute to the NADP(+) site.

Belongs to the tetrahydrofolate dehydrogenase/cyclohydrolase family. In terms of assembly, homodimer.

It catalyses the reaction (6R)-5,10-methylene-5,6,7,8-tetrahydrofolate + NADP(+) = (6R)-5,10-methenyltetrahydrofolate + NADPH. The catalysed reaction is (6R)-5,10-methenyltetrahydrofolate + H2O = (6R)-10-formyltetrahydrofolate + H(+). The protein operates within one-carbon metabolism; tetrahydrofolate interconversion. Functionally, catalyzes the oxidation of 5,10-methylenetetrahydrofolate to 5,10-methenyltetrahydrofolate and then the hydrolysis of 5,10-methenyltetrahydrofolate to 10-formyltetrahydrofolate. The chain is Bifunctional protein FolD from Mesoplasma florum (strain ATCC 33453 / NBRC 100688 / NCTC 11704 / L1) (Acholeplasma florum).